Consider the following 134-residue polypeptide: ATP synthase epsilon chain (134 aa).

Belongs to the ATPase epsilon chain family. As to quaternary structure, F-type ATPases have 2 components, CF(1) - the catalytic core - and CF(0) - the membrane proton channel. CF(1) has five subunits: alpha(3), beta(3), gamma(1), delta(1), epsilon(1). CF(0) has three main subunits: a, b and c.

It is found in the cell inner membrane. Functionally, produces ATP from ADP in the presence of a proton gradient across the membrane. This chain is ATP synthase epsilon chain, found in Syntrophobacter fumaroxidans (strain DSM 10017 / MPOB).